A 357-amino-acid polypeptide reads, in one-letter code: Protein pelota homolog (357 aa).

This sequence belongs to the eukaryotic release factor 1 family. Pelota subfamily. In terms of assembly, monomer. A divalent metal cation serves as cofactor.

It localises to the cytoplasm. Its function is as follows. May function in recognizing stalled ribosomes, interact with stem-loop structures in stalled mRNA molecules, and effect endonucleolytic cleavage of the mRNA. May play a role in the release non-functional ribosomes and degradation of damaged mRNAs. Has endoribonuclease activity. This chain is Protein pelota homolog, found in Halobacterium salinarum (strain ATCC 29341 / DSM 671 / R1).